The following is a 203-amino-acid chain: Somatotropin (203 aa).

The first 17 residues, 1 to 17 (MDRVVLMLSVLSLGVSS), serve as a signal peptide directing secretion. At Q18 the chain carries Pyrrolidone carboxylic acid. H36 is a binding site for Zn(2+). Cysteines 68 and 176 form a disulfide. E185 contributes to the Zn(2+) binding site. A disulfide bridge connects residues C193 and C201.

It belongs to the somatotropin/prolactin family.

It is found in the secreted. Growth hormone plays an important role in growth control and is involved in the regulation of several anabolic processes. Implicated as an osmoregulatory substance important for seawater adaptation. The sequence is that of Somatotropin (gh) from Pagrus major (Red sea bream).